The sequence spans 218 residues: Ribose-5-phosphate isomerase A (218 aa).

Substrate is bound by residues 28-31 (TGST), 81-84 (DGAD), and 94-97 (KGGG). The active-site Proton acceptor is the Glu-103. Lys-121 contributes to the substrate binding site.

Belongs to the ribose 5-phosphate isomerase family. As to quaternary structure, homodimer.

The catalysed reaction is aldehydo-D-ribose 5-phosphate = D-ribulose 5-phosphate. The protein operates within carbohydrate degradation; pentose phosphate pathway; D-ribose 5-phosphate from D-ribulose 5-phosphate (non-oxidative stage): step 1/1. Functionally, catalyzes the reversible conversion of ribose-5-phosphate to ribulose 5-phosphate. This is Ribose-5-phosphate isomerase A from Aliivibrio salmonicida (strain LFI1238) (Vibrio salmonicida (strain LFI1238)).